Reading from the N-terminus, the 98-residue chain is Large ribosomal subunit protein uL23 (98 aa).

The protein belongs to the universal ribosomal protein uL23 family. Part of the 50S ribosomal subunit. Contacts protein L29, and trigger factor when it is bound to the ribosome.

Its function is as follows. One of the early assembly proteins it binds 23S rRNA. One of the proteins that surrounds the polypeptide exit tunnel on the outside of the ribosome. Forms the main docking site for trigger factor binding to the ribosome. This is Large ribosomal subunit protein uL23 from Rickettsia canadensis (strain McKiel).